The chain runs to 1058 residues: Protein translocase subunit SECA2, chloroplastic (1058 aa).

The N-terminal 58 residues, 1–58, are a transit peptide targeting the chloroplast; it reads MGSVSNLVSPNICHPAPPCLTSRSNKFPWTKPISGLLFYRSVTPIKRCHLVRRSCVVS. 167–174 contributes to the ATP binding site; it reads MKTGEGKT.

This sequence belongs to the SecA family. In terms of assembly, part of a second Sec protein translocation apparatus. Interacts probably with SCY2.

It localises to the plastid. Its subcellular location is the chloroplast membrane. It catalyses the reaction ATP + H2O + chloroplast-proteinSide 1 = ADP + phosphate + chloroplast-proteinSide 2.. Its function is as follows. Involved in protein export. Probably interacts with other proteins to allow the postimport or conservative sorting pathway for inner membrane proteins in plastids. May have a central role in coupling the hydrolysis of ATP to the transfer of proteins across the membrane. The protein is Protein translocase subunit SECA2, chloroplastic of Arabidopsis thaliana (Mouse-ear cress).